Here is a 229-residue protein sequence, read N- to C-terminus: Ribonuclease HII (229 aa).

In terms of domain architecture, RNase H type-2 spans Gly34–Gln225. Residues Asp40, Glu41, and Asp134 each coordinate a divalent metal cation.

This sequence belongs to the RNase HII family. Requires Mn(2+) as cofactor. Mg(2+) serves as cofactor.

It is found in the cytoplasm. The enzyme catalyses Endonucleolytic cleavage to 5'-phosphomonoester.. In terms of biological role, endonuclease that specifically degrades the RNA of RNA-DNA hybrids. The polypeptide is Ribonuclease HII (Corynebacterium diphtheriae (strain ATCC 700971 / NCTC 13129 / Biotype gravis)).